Consider the following 276-residue polypeptide: ATP synthase subunit delta (276 aa).

This sequence belongs to the ATPase delta chain family. F-type ATPases have 2 components, F(1) - the catalytic core - and F(0) - the membrane proton channel. F(1) has five subunits: alpha(3), beta(3), gamma(1), delta(1), epsilon(1). F(0) has three main subunits: a(1), b(2) and c(10-14). The alpha and beta chains form an alternating ring which encloses part of the gamma chain. F(1) is attached to F(0) by a central stalk formed by the gamma and epsilon chains, while a peripheral stalk is formed by the delta and b chains.

The protein resides in the cell membrane. In terms of biological role, f(1)F(0) ATP synthase produces ATP from ADP in the presence of a proton or sodium gradient. F-type ATPases consist of two structural domains, F(1) containing the extramembraneous catalytic core and F(0) containing the membrane proton channel, linked together by a central stalk and a peripheral stalk. During catalysis, ATP synthesis in the catalytic domain of F(1) is coupled via a rotary mechanism of the central stalk subunits to proton translocation. This protein is part of the stalk that links CF(0) to CF(1). It either transmits conformational changes from CF(0) to CF(1) or is implicated in proton conduction. This is ATP synthase subunit delta from Frankia casuarinae (strain DSM 45818 / CECT 9043 / HFP020203 / CcI3).